A 318-amino-acid polypeptide reads, in one-letter code: MYNYLDFEKPVADLDGKILELKKIFQEKGSLDMSDEIARLEKRSQTALNDIYKKLTPWQKTQVARHPDRPHFMDYSKRLLSDVTPLAGDRKFAEDEAIQAGFARFKGEAVAYIGQEKGHDTQTRLRYNFGSARPEGYRKAVRIMEMADRFGLPLLTFIDTAGAYPGVSAEERGQAEAIAQSTAATLRLKVPVVSVVIGEGGSGGAIAIAAANKVYMLEHAIYSVISPEGAASILWRDPARAKDAAMNMRITAQDLYRLKIIDGIISEPLGGAHRGKEIAIDATGEIISEALKAMVGKDGEVLKQERREKYLQIGRSLA.

A CoA carboxyltransferase C-terminal domain is found at 39–297 (RLEKRSQTAL…SEALKAMVGK (259 aa)).

It belongs to the AccA family. Acetyl-CoA carboxylase is a heterohexamer composed of biotin carboxyl carrier protein (AccB), biotin carboxylase (AccC) and two subunits each of ACCase subunit alpha (AccA) and ACCase subunit beta (AccD).

Its subcellular location is the cytoplasm. The catalysed reaction is N(6)-carboxybiotinyl-L-lysyl-[protein] + acetyl-CoA = N(6)-biotinyl-L-lysyl-[protein] + malonyl-CoA. Its pathway is lipid metabolism; malonyl-CoA biosynthesis; malonyl-CoA from acetyl-CoA: step 1/1. In terms of biological role, component of the acetyl coenzyme A carboxylase (ACC) complex. First, biotin carboxylase catalyzes the carboxylation of biotin on its carrier protein (BCCP) and then the CO(2) group is transferred by the carboxyltransferase to acetyl-CoA to form malonyl-CoA. The protein is Acetyl-coenzyme A carboxylase carboxyl transferase subunit alpha of Bartonella tribocorum (strain CIP 105476 / IBS 506).